The following is a 367-amino-acid chain: MQANSSAKSLPTECPDYQPIHHLHLVVYSVVLAAGLPLNALALWVFLRALRVHSVVSVYMCNLAASDLLFTLSLPLRLSYYARHYWPFPDFLCQLAGAVFQMNMYGSCIFLTLINVDRYAAIVHPLRLRHLRRPRVARLLCLGVWALILVFAVPTILAHQPSSCARDGRNVSLCFESFSDKLWKGSLLPLLLLAEALGFLLPLAAVVYSSGRVFWTLARPDATRSQRRRKTVRLLLASLVIFLLCFVPYNATLAVYGLLRGEVVPASSEARKKVRGVLMVMVLLAGANCVLDPLVYYFSAEGFRNTLRGLRAPLRDRTLAANGAQEALAEPLTETAHASTLTTTSQGQLQPSDPRSSFTPSHEDSSF.

The Extracellular portion of the chain corresponds to 1 to 25 (MQANSSAKSLPTECPDYQPIHHLHL). Asn4 is a glycosylation site (N-linked (GlcNAc...) asparagine). A helical membrane pass occupies residues 26–46 (VVYSVVLAAGLPLNALALWVF). Over 47 to 54 (LRALRVHS) the chain is Cytoplasmic. Residues 55-75 (VVSVYMCNLAASDLLFTLSLP) traverse the membrane as a helical segment. At 76 to 95 (LRLSYYARHYWPFPDFLCQL) the chain is on the extracellular side. Cys93 and Cys174 are joined by a disulfide. Residues 96 to 116 (AGAVFQMNMYGSCIFLTLINV) form a helical membrane-spanning segment. The Cytoplasmic segment spans residues 117-135 (DRYAAIVHPLRLRHLRRPR). Residues 136–156 (VARLLCLGVWALILVFAVPTI) traverse the membrane as a helical segment. At 157-186 (LAHQPSSCARDGRNVSLCFESFSDKLWKGS) the chain is on the extracellular side. Asn170 carries an N-linked (GlcNAc...) asparagine glycan. The chain crosses the membrane as a helical span at residues 187-207 (LLPLLLLAEALGFLLPLAAVV). Topologically, residues 208–238 (YSSGRVFWTLARPDATRSQRRRKTVRLLLAS) are cytoplasmic. The helical transmembrane segment at 239-259 (LVIFLLCFVPYNATLAVYGLL) threads the bilayer. The Extracellular portion of the chain corresponds to 260–275 (RGEVVPASSEARKKVR). Residues 276–296 (GVLMVMVLLAGANCVLDPLVY) form a helical membrane-spanning segment. The Cytoplasmic portion of the chain corresponds to 297 to 367 (YFSAEGFRNT…FTPSHEDSSF (71 aa)). Residues 332–350 (LTETAHASTLTTTSQGQLQ) are compositionally biased toward low complexity. The interval 332 to 367 (LTETAHASTLTTTSQGQLQPSDPRSSFTPSHEDSSF) is disordered. The segment covering 351–360 (PSDPRSSFTP) has biased composition (polar residues).

It belongs to the G-protein coupled receptor 1 family.

It localises to the cell membrane. Functionally, receptor for lysophosphatidic acid (LPA), a mediator of diverse cellular activities. This Bos taurus (Bovine) protein is Lysophosphatidic acid receptor 5 (LPAR5).